Here is a 167-residue protein sequence, read N- to C-terminus: S-ribosylhomocysteine lyase (167 aa).

3 residues coordinate Fe cation: histidine 54, histidine 58, and cysteine 128.

Belongs to the LuxS family. In terms of assembly, homodimer. Fe cation serves as cofactor.

It catalyses the reaction S-(5-deoxy-D-ribos-5-yl)-L-homocysteine = (S)-4,5-dihydroxypentane-2,3-dione + L-homocysteine. In terms of biological role, involved in the synthesis of autoinducer 2 (AI-2) which is secreted by bacteria and is used to communicate both the cell density and the metabolic potential of the environment. The regulation of gene expression in response to changes in cell density is called quorum sensing. Catalyzes the transformation of S-ribosylhomocysteine (RHC) to homocysteine (HC) and 4,5-dihydroxy-2,3-pentadione (DPD). In Haemophilus influenzae (strain 86-028NP), this protein is S-ribosylhomocysteine lyase.